The sequence spans 480 residues: Voltage-gated potassium channel regulatory subunit KCNG2 (480 aa).

2 disordered regions span residues 1-25 (MARLPGHPEVPGAEPGSAVRGGRGG) and 144-167 (AAEARATPPARGPQTSPGRALGSG). At 1-187 (MARLPGHPEV…DVVENPHSGL (187 aa)) the chain is on the cytoplasmic side. Residues 188–209 (AGKLFAYVSVAFVAVTAVGLCL) form a helical membrane-spanning segment. The Extracellular segment spans residues 210–230 (STMPDVRAEEERGECSTKCRN). The helical transmembrane segment at 231–252 (LFVLETVCVAWFSFEFLLRSLQ) threads the bilayer. The Cytoplasmic segment spans residues 253 to 263 (AESKCAFLRTP). The helical transmembrane segment at 264-284 (LAIIDILAILPFYVSLLAGLA) threads the bilayer. At 285-296 (AGPTGSKMLERA) the chain is on the extracellular side. Residues 297 to 317 (GLVLRLLRALRVLYVMRLARH) traverse the membrane as a helical; Voltage-sensor segment. At 318–332 (SLGLRSLGLTVRRCA) the chain is on the cytoplasmic side. The chain crosses the membrane as a helical span at residues 333–354 (REFGLLLLFLCVAMALFAPLVH). Topologically, residues 355–369 (LAERELGAHRDFSSV) are extracellular. Positions 370-381 (PASYWWAVISMT) form an intramembrane region, helical. A Selectivity filter motif is present at residues 382-387 (TVGYGD). The stretch at 382-389 (TVGYGDMV) is an intramembrane region. Residues 390–396 (PRSLPGQ) lie on the Extracellular side of the membrane. The chain crosses the membrane as a helical span at residues 397 to 425 (VVALSSILSGILLMAFPVTSIFHTFSRSY). At 426–480 (SELKEQQQRAASPEPVLREDSTRDDSTRSASATEDSSQDPETAGAAGSLPGPVGP) the chain is on the cytoplasmic side. Residues 429–480 (KEQQQRAASPEPVLREDSTRDDSTRSASATEDSSQDPETAGAAGSLPGPVGP) are disordered. Residues 441-452 (VLREDSTRDDST) are compositionally biased toward basic and acidic residues.

Belongs to the potassium channel family. G (TC 1.A.1.2) subfamily. Kv6.2/KCNG2 sub-subfamily. As to quaternary structure, heterodimer with KCNB1. Highly expressed in heart, in particular in right and left atrium, and detected at lower levels in the right and left ventricle.

The protein resides in the cell membrane. In terms of biological role, regulatory alpha-subunit of the voltage-gated potassium (Kv) channel which, when coassembled with KCNB1, can modulate the kinetics and conductance-voltage relationship. Modulates channel activity by shifting the threshold and the half-maximal activation to more negative values. Potassium channel subunit that does not form functional channels by itself. This is Voltage-gated potassium channel regulatory subunit KCNG2 from Rattus norvegicus (Rat).